The sequence spans 121 residues: Non-specific lipid-transfer protein 9 (121 aa).

A signal peptide spans Met1–Ser27. 4 cysteine pairs are disulfide-bonded: Cys31-Cys80, Cys41-Cys57, Cys58-Cys102, and Cys78-Cys116.

The protein belongs to the plant LTP family.

Plant non-specific lipid-transfer proteins transfer phospholipids as well as galactolipids across membranes. May play a role in wax or cutin deposition in the cell walls of expanding epidermal cells and certain secretory tissues. This is Non-specific lipid-transfer protein 9 (LTP9) from Arabidopsis thaliana (Mouse-ear cress).